We begin with the raw amino-acid sequence, 231 residues long: NADH-ubiquinone oxidoreductase chain 4 (231 aa).

The next 6 membrane-spanning stretches (helical) occupy residues 1–21 (PIAG…YGII), 34–54 (LFLP…LTCL), 61–80 (SLIA…AIII), 84–106 (WGLS…LFCL), 128–148 (ILPM…ATPP), and 169–189 (TIIL…HMFL).

The protein belongs to the complex I subunit 4 family.

It localises to the mitochondrion membrane. The enzyme catalyses a ubiquinone + NADH + 5 H(+)(in) = a ubiquinol + NAD(+) + 4 H(+)(out). In terms of biological role, core subunit of the mitochondrial membrane respiratory chain NADH dehydrogenase (Complex I) that is believed to belong to the minimal assembly required for catalysis. Complex I functions in the transfer of electrons from NADH to the respiratory chain. The immediate electron acceptor for the enzyme is believed to be ubiquinone. This is NADH-ubiquinone oxidoreductase chain 4 (MT-ND4) from Metlapilcoatlus nummifer (Mexican jumping pitviper).